The following is a 466-amino-acid chain: Cysteine--tRNA ligase (466 aa).

Cys-29 is a binding site for Zn(2+). The short motif at Pro-31 to Asn-41 is the 'HIGH' region element. Residues Cys-209, His-234, and Glu-238 each coordinate Zn(2+). The 'KMSKS' region motif lies at Lys-266–Ser-270. Lys-269 serves as a coordination point for ATP.

This sequence belongs to the class-I aminoacyl-tRNA synthetase family. Monomer. Requires Zn(2+) as cofactor.

The protein localises to the cytoplasm. The enzyme catalyses tRNA(Cys) + L-cysteine + ATP = L-cysteinyl-tRNA(Cys) + AMP + diphosphate. In Lysinibacillus sphaericus (strain C3-41), this protein is Cysteine--tRNA ligase.